Consider the following 526-residue polypeptide: Estrogen receptor beta (526 aa).

The modulating stretch occupies residues 1 to 145 (MDIKNSPSNL…SPSSKRDAHF (145 aa)). S84 and S102 each carry phosphoserine; by MAPK. 2 consecutive NR C4-type zinc fingers follow at residues 146–166 (CAVC…CEGC) and 182–206 (CPAT…LRKC). The segment at residues 146–211 (CAVCSDYASG…RLRKCYEVGM (66 aa)) is a DNA-binding region (nuclear receptor). In terms of domain architecture, NR LBD spans 261 to 494 (SPEQLVLTLL…DLLLEMLNAH (234 aa)). The interval 502–526 (LVTGSERSRMEESESKEGSQKPQAQ) is disordered. Basic and acidic residues predominate over residues 507 to 520 (ERSRMEESESKEGS).

This sequence belongs to the nuclear hormone receptor family. NR3 subfamily. Binds DNA as a homodimer. Can form a heterodimer with ESR1. Interacts with NCOA1, NCOA3, NCOA5 and NCOA6 coactivators, leading to a strong increase of transcription of target genes. Interacts with UBE1C and AKAP13. Interacts with DNTTIP2. Interacts with CCDC62 in the presence of estradiol/E2; this interaction seems to enhance the transcription of target genes. Interacts with DNAAF4. Interacts with PRMT2. Interacts with CCAR2 (via N-terminus) in a ligand-independent manner. Interacts with RBM39, in the presence of estradiol (E2). Interacts with STUB1/CHIP. Phosphorylation at Ser-84 and Ser-102 recruits NCOA1.

The protein localises to the nucleus. Nuclear hormone receptor. Binds estrogens with an affinity similar to that of ESR1/ER-alpha, and activates expression of reporter genes containing estrogen response elements (ERE) in an estrogen-dependent manner. This chain is Estrogen receptor beta (ESR2), found in Sus scrofa (Pig).